A 136-amino-acid polypeptide reads, in one-letter code: Large ribosomal subunit protein uL16 (136 aa).

The protein belongs to the universal ribosomal protein uL16 family. Part of the 50S ribosomal subunit.

Binds 23S rRNA and is also seen to make contacts with the A and possibly P site tRNAs. This Shewanella piezotolerans (strain WP3 / JCM 13877) protein is Large ribosomal subunit protein uL16.